Reading from the N-terminus, the 284-residue chain is Ermin (284 aa).

Residues 1–23 (MTDVPATFTQAECNGDKPPENGQ) are disordered. Ser-73 is modified (phosphoserine). The disordered stretch occupies residues 110-251 (REGHQWEKIP…PTLGKKSDIS (142 aa)). Basic and acidic residues-rich tracts occupy residues 126–140 (EIRR…QPLK) and 171–183 (LHSK…KVWD). Over residues 184–200 (EEIDDDDDDNCNNDEDE) the composition is skewed to acidic residues. The segment covering 201-220 (VRVIEFKKKHEEVSQFKEEG) has biased composition (basic and acidic residues). Residues Ser-214, Ser-226, Ser-230, and Ser-233 each carry the phosphoserine modification. A compositionally biased stretch (low complexity) spans 225–235 (DSPLSSASSQA). Phosphothreonine is present on Thr-237. A binds actin region spans residues 265 to 284 (KIRKGNTKQRIDEFESMMHL).

In terms of assembly, binds actin. Highly expressed in adult and fetal brain. Expressed at intermediate levels in the lung and liver.

Its subcellular location is the cytoplasm. It is found in the cytoskeleton. Its function is as follows. Plays a role in cytoskeletal rearrangements during the late wrapping and/or compaction phases of myelinogenesis as well as in maintenance and stability of myelin sheath in the adult. May play an important role in late-stage oligodendroglia maturation, myelin/Ranvier node formation during CNS development, and in the maintenance and plasticity of related structures in the mature CNS. This Homo sapiens (Human) protein is Ermin (ERMN).